Reading from the N-terminus, the 374-residue chain is 2-oxoglutarate-Fe(II) type oxidoreductase ppzC (374 aa).

The segment at 111–131 is disordered; the sequence is KKGPFDSGYRGPGTQRVNPDE. The Fe2OG dioxygenase domain maps to 220–330; the sequence is YPDASLEINF…RVSMPFFWGF (111 aa). Positions 254, 256, and 311 each coordinate Fe cation. Residue Arg321 participates in 2-oxoglutarate binding.

The protein belongs to the iron/ascorbate-dependent oxidoreductase family. The cofactor is Fe(2+).

It carries out the reaction peramine + 2-oxoglutarate + O2 = 8-hydroxyperamine + succinate + CO2. Its pathway is secondary metabolite biosynthesis. 2-oxoglutarate-Fe(II) type oxidoreductase; part of the gene cluster that mediates the biosynthesis of pyrrolopyrazines, secondary metabolites showing insecticidal activity. Within the pathway, ppzC uses peramine as substrate for hydroxylation to yield the novel analog 8-hydroxyperamine. The single multifunctional NRPS ppzA is sufficient to produce peramine via condensation of 1-pyrroline-5-carboxylate and arginine, N-methylation of the alpha-amino group of arginine and reduction of the thioester and the cyclization to form an iminium ion resulting in release from the peptide synthetase. Deprotonation of this intermediate and oxidation of the pyrroline ring would give rise to peramine. In Epichloe species that produce only peramine, the peramine synthetase gene is not localized in a gene cluster, in contrast to Metarhizium species that contain additional pyrrolopyrazine biosynthesis genes. The 2-oxoglutarate-Fe(II) type oxidoreductase ppzC hydroxylates peramine to yield the newly identified compound 8-hydroxyperamine whereas ppzD converts L-proline into trans-4-hydroxy-L-proline, a precursor of peramine biosynthesis. The chain is 2-oxoglutarate-Fe(II) type oxidoreductase ppzC (ppzC) from Metarhizium majus (strain ARSEF 297).